A 401-amino-acid polypeptide reads, in one-letter code: Protein-glutamate methylesterase/protein-glutamine glutaminase (401 aa).

A Response regulatory domain is found at 16-134 (RVLVIDDSAV…LAGAEEFRRD (119 aa)). Position 67 is a 4-aspartylphosphate (Asp67). A disordered region spans residues 146–208 (PIPPVPTQRD…PQGRGTPRNT (63 aa)). Composition is skewed to low complexity over residues 166-176 (AAPGAPVARSI) and 185-199 (SAPA…AQPP). The region spanning 205-400 (PRNTARPEII…PGIVRRAKGG (196 aa)) is the CheB-type methylesterase domain. Catalysis depends on residues Ser219, His246, and Asp342.

This sequence belongs to the CheB family. In terms of processing, phosphorylated by CheA. Phosphorylation of the N-terminal regulatory domain activates the methylesterase activity.

Its subcellular location is the cytoplasm. It catalyses the reaction [protein]-L-glutamate 5-O-methyl ester + H2O = L-glutamyl-[protein] + methanol + H(+). The enzyme catalyses L-glutaminyl-[protein] + H2O = L-glutamyl-[protein] + NH4(+). In terms of biological role, involved in chemotaxis. Part of a chemotaxis signal transduction system that modulates chemotaxis in response to various stimuli. Catalyzes the demethylation of specific methylglutamate residues introduced into the chemoreceptors (methyl-accepting chemotaxis proteins or MCP) by CheR. Also mediates the irreversible deamidation of specific glutamine residues to glutamic acid. This chain is Protein-glutamate methylesterase/protein-glutamine glutaminase, found in Maricaulis maris (strain MCS10) (Caulobacter maris).